The following is a 215-amino-acid chain: Sodium channel regulatory subunit beta-2 (215 aa).

The signal sequence occupies residues 1–29 (MHRDAWLPRPAFSLTGLSLFFSLVPPGRS). Residues 30–157 (MEVTVPATLN…XEEPPERDST (128 aa)) lie on the Extracellular side of the membrane. Positions 32-154 (VTVPATLNVL…QVLXEEPPER (123 aa)) constitute an Ig-like C2-type domain. Residues asparagine 42, asparagine 66, and asparagine 74 are each glycosylated (N-linked (GlcNAc...) asparagine). 2 disulfide bridges follow: cysteine 50/cysteine 127 and cysteine 72/cysteine 75. Residues 158–179 (VAVIVGASVGGFLAVVILVLMV) form a helical membrane-spanning segment. Residues 180-215 (VKCVRRKKEQKLSTDDLKTEEEGKTDGEGNPDDGAK) lie on the Cytoplasmic side of the membrane. The disordered stretch occupies residues 187-215 (KEQKLSTDDLKTEEEGKTDGEGNPDDGAK). Over residues 189-215 (QKLSTDDLKTEEEGKTDGEGNPDDGAK) the composition is skewed to basic and acidic residues. Serine 192 is subject to Phosphoserine. A Phosphothreonine modification is found at threonine 204.

This sequence belongs to the sodium channel auxiliary subunit SCN2B (TC 8.A.17) family. A voltage-gated sodium (Nav) channel consists of an ion-conducting pore-forming alpha subunit functional on its own that is regulated by one or more beta subunits. The beta subunit SCN2B is disulfide-linked to the pore-forming alpha subunit. Interacts with SCN1A; regulatory subunit of SCN1A/Nav1.1. Interacts with SCN2A; regulatory subunit of SCN2A/Nav1.2. Interacts with SCN3A; regulatory subunit of SCN3A/Nav1.3. Interacts with SCN5A; regulatory subunit of SCN5A/Nav1.5. Interacts with SCN8A; regulatory subunit of SCN8A/Nav1.6. Interacts with SCN9A; regulatory subunit of SCN9A/Nav1.7. Interacts with SCN10A; regulatory subunit of SCN10A/Nav1.8. Interacts with TNR; may play a crucial role in clustering and regulation of activity of SCN2B-containing Nav channels at nodes of Ranvier.

The protein resides in the cell membrane. The protein localises to the cell projection. Its subcellular location is the axon. Its function is as follows. Regulatory subunit of multiple voltage-gated sodium (Nav) channels, that directly mediate the depolarization of excitable membranes. Navs, also called VGSCs (voltage-gated sodium channels) or VDSCs (voltage-dependent sodium channels), operate by switching between closed and open conformations depending on the voltage difference across the membrane. In the open conformation they allow Na(+) ions to selectively pass through the pore, along their electrochemical gradient. The influx of Na+ ions provokes membrane depolarization, initiating the propagation of electrical signals throughout cells and tissues. The accessory beta subunits participate in localization and functional modulation of the Nav channels. Modulates the activity of SCN1A/Nav1.1, SCN2A/Nav1.2, SCN2A/Nav1.3, SCN5A/Nav1.5, SCN8A/Nav1.6, SCN9A/Nav1.7 and SCN10A/Nav1.8. The protein is Sodium channel regulatory subunit beta-2 of Canis lupus familiaris (Dog).